A 62-amino-acid polypeptide reads, in one-letter code: Large ribosomal subunit protein uL29 (62 aa).

It belongs to the universal ribosomal protein uL29 family.

This Oleidesulfovibrio alaskensis (strain ATCC BAA-1058 / DSM 17464 / G20) (Desulfovibrio alaskensis) protein is Large ribosomal subunit protein uL29.